Here is a 79-residue protein sequence, read N- to C-terminus: Protein SNA2 (79 aa).

At 1 to 6 (MHARDW) the chain is on the cytoplasmic side. Residues 7–27 (FLVFIAIFIPPLAVWLKRGFF) form a helical membrane-spanning segment. Over 28–32 (TKDLL) the chain is Vesicular. Residues 33–53 (INFLLFLLGFFPGLIHALYVI) form a helical membrane-spanning segment. The Cytoplasmic portion of the chain corresponds to 54–79 (SCHPYEENEARYSHLSSSDDNYGSLA). Phosphoserine occurs at positions 71 and 77.

The protein belongs to the UPF0057 (PMP3) family.

The protein resides in the membrane. The protein localises to the lipid droplet. The chain is Protein SNA2 (SNA2) from Saccharomyces cerevisiae (strain ATCC 204508 / S288c) (Baker's yeast).